A 146-amino-acid chain; its full sequence is Large ribosomal subunit protein uL15 (146 aa).

The span at 1–10 shows a compositional bias: basic and acidic residues; that stretch reads MTLKLHDLRP. The tract at residues 1–41 is disordered; sequence MTLKLHDLRPARGSKIARTRVGRGDGSKGKTAGRGTKGTRA.

It belongs to the universal ribosomal protein uL15 family. In terms of assembly, part of the 50S ribosomal subunit.

Its function is as follows. Binds to the 23S rRNA. The protein is Large ribosomal subunit protein uL15 of Mycobacterium tuberculosis (strain ATCC 25177 / H37Ra).